Here is a 158-residue protein sequence, read N- to C-terminus: SsrA-binding protein (158 aa).

The protein belongs to the SmpB family.

The protein localises to the cytoplasm. Functionally, required for rescue of stalled ribosomes mediated by trans-translation. Binds to transfer-messenger RNA (tmRNA), required for stable association of tmRNA with ribosomes. tmRNA and SmpB together mimic tRNA shape, replacing the anticodon stem-loop with SmpB. tmRNA is encoded by the ssrA gene; the 2 termini fold to resemble tRNA(Ala) and it encodes a 'tag peptide', a short internal open reading frame. During trans-translation Ala-aminoacylated tmRNA acts like a tRNA, entering the A-site of stalled ribosomes, displacing the stalled mRNA. The ribosome then switches to translate the ORF on the tmRNA; the nascent peptide is terminated with the 'tag peptide' encoded by the tmRNA and targeted for degradation. The ribosome is freed to recommence translation, which seems to be the essential function of trans-translation. This is SsrA-binding protein from Bartonella tribocorum (strain CIP 105476 / IBS 506).